A 430-amino-acid chain; its full sequence is MKTQMNYAKEGIFTKEMQIVAQKENLSKDFLLENIACGKIIIPANINHKSLDPNGIGFGLRTKVNVNLGVSNDCVDYSEEMKKVELAHKFGIEAIMDLSNYGKTSRFRDELVNVSKAMIGTVPVYDAVGFLEKDLKQINAKDFLDVVYHHAKSGVDFMTIHAGINSRAAHIFKQSKRLTNIVSRGGSVLYAWMMMKDAENPFFEYYDDLLDICLKYDVTLSLGDALRPGSTHDASDGAQISELIELSLLTQRAWDVGIQVMIEGPGHMAINEIEANMQLEKRLCKGAPFYVLGPLVTDIGAGYDHISGAIGGAVAAASGADMLCYVTPAEHLRLPNLEDVREGIVATKIAAHAGDIAKLPKERARDDEMSKARQEIDWEKMFKLAIDGEKAKKMFNERRPDDLNSCSMCGKMCAMNTMNQILKGEDVSLA.

Substrate-binding positions include N67, M96, Y125, H161, S183–G185, D224–R227, and E263. Residue H267 participates in Zn(2+) binding. Residue Y290 participates in substrate binding. Residue H331 participates in Zn(2+) binding. Residues C406, C409, and C413 each contribute to the [4Fe-4S] cluster site.

Belongs to the ThiC family. In terms of assembly, homodimer. It depends on [4Fe-4S] cluster as a cofactor.

The enzyme catalyses 5-amino-1-(5-phospho-beta-D-ribosyl)imidazole + S-adenosyl-L-methionine = 4-amino-2-methyl-5-(phosphooxymethyl)pyrimidine + CO + 5'-deoxyadenosine + formate + L-methionine + 3 H(+). Its pathway is cofactor biosynthesis; thiamine diphosphate biosynthesis. Catalyzes the synthesis of the hydroxymethylpyrimidine phosphate (HMP-P) moiety of thiamine from aminoimidazole ribotide (AIR) in a radical S-adenosyl-L-methionine (SAM)-dependent reaction. The chain is Phosphomethylpyrimidine synthase from Campylobacter jejuni subsp. jejuni serotype O:2 (strain ATCC 700819 / NCTC 11168).